A 201-amino-acid polypeptide reads, in one-letter code: Holliday junction branch migration complex subunit RuvA (201 aa).

Positions 1–63 (MIASVRGEVL…EDSMTLYGFA (63 aa)) are domain I. Residues 64-142 (DTEARDLFGL…LVPVQAGPPG (79 aa)) are domain II. Residues 143–153 (STPAVAATPVR) are flexible linker. The interval 153 to 201 (REQVVEALTGLGFPLKQAEQALDTVLAEQPAADTSTALRAALSLLGKNR) is domain III.

It belongs to the RuvA family. As to quaternary structure, homotetramer. Forms an RuvA(8)-RuvB(12)-Holliday junction (HJ) complex. HJ DNA is sandwiched between 2 RuvA tetramers; dsDNA enters through RuvA and exits via RuvB. An RuvB hexamer assembles on each DNA strand where it exits the tetramer. Each RuvB hexamer is contacted by two RuvA subunits (via domain III) on 2 adjacent RuvB subunits; this complex drives branch migration. In the full resolvosome a probable DNA-RuvA(4)-RuvB(12)-RuvC(2) complex forms which resolves the HJ.

It localises to the cytoplasm. Functionally, the RuvA-RuvB-RuvC complex processes Holliday junction (HJ) DNA during genetic recombination and DNA repair, while the RuvA-RuvB complex plays an important role in the rescue of blocked DNA replication forks via replication fork reversal (RFR). RuvA specifically binds to HJ cruciform DNA, conferring on it an open structure. The RuvB hexamer acts as an ATP-dependent pump, pulling dsDNA into and through the RuvAB complex. HJ branch migration allows RuvC to scan DNA until it finds its consensus sequence, where it cleaves and resolves the cruciform DNA. The chain is Holliday junction branch migration complex subunit RuvA from Nocardia farcinica (strain IFM 10152).